The sequence spans 322 residues: MKTLDENQAPSRQTPESHRRGAEKLSRIPVKVEPGAPLRKPDWIRVRAGSGDEVRRVKRLLRERGLHSVCEEAACPNLAECFGHGTATFMILGDICTRRCPFCDVAHGRPAPPDPAEPERLAETIALLRLRYVVITSVDRDDLRDGGAAHFAACIRALRTRSPALSVEILTPDFRGRMEIALDLLAADPPDVFNHNIETVPRLYRQARPGADYRQSLELLARFRDKVPGVPTKSGLMLGLGETLDEVREALRDLRGHGCEMLTLGQYLQPSRDHLPVVRYVPPAEFDELAGYARELGFASVASAPLVRSSYHADQQAAIIGR.

The segment covering 1-14 (MKTLDENQAPSRQT) has biased composition (polar residues). A disordered region spans residues 1–30 (MKTLDENQAPSRQTPESHRRGAEKLSRIPV). A compositionally biased stretch (basic and acidic residues) spans 15 to 26 (PESHRRGAEKLS). The [4Fe-4S] cluster site is built by Cys-70, Cys-75, Cys-81, Cys-96, Cys-100, Cys-103, and Ser-310. The Radical SAM core domain maps to 82-299 (FGHGTATFMI…AGYARELGFA (218 aa)).

This sequence belongs to the radical SAM superfamily. Lipoyl synthase family. It depends on [4Fe-4S] cluster as a cofactor.

Its subcellular location is the cytoplasm. It carries out the reaction [[Fe-S] cluster scaffold protein carrying a second [4Fe-4S](2+) cluster] + N(6)-octanoyl-L-lysyl-[protein] + 2 oxidized [2Fe-2S]-[ferredoxin] + 2 S-adenosyl-L-methionine + 4 H(+) = [[Fe-S] cluster scaffold protein] + N(6)-[(R)-dihydrolipoyl]-L-lysyl-[protein] + 4 Fe(3+) + 2 hydrogen sulfide + 2 5'-deoxyadenosine + 2 L-methionine + 2 reduced [2Fe-2S]-[ferredoxin]. It functions in the pathway protein modification; protein lipoylation via endogenous pathway; protein N(6)-(lipoyl)lysine from octanoyl-[acyl-carrier-protein]: step 2/2. Its function is as follows. Catalyzes the radical-mediated insertion of two sulfur atoms into the C-6 and C-8 positions of the octanoyl moiety bound to the lipoyl domains of lipoate-dependent enzymes, thereby converting the octanoylated domains into lipoylated derivatives. The sequence is that of Lipoyl synthase from Methylococcus capsulatus (strain ATCC 33009 / NCIMB 11132 / Bath).